Consider the following 202-residue polypeptide: MVVAMGIGNVLWADEGFGVRCIETLQQRYQFAPQVCLVDGGTQGLYLIHHVQAASRLLIFDAIDYGLPPGTLRIIEDEAVPKFLGAKKMSLHQTGFQEVLLLAQLTGQYPQQVVLIGCQPEELEDYGGSLRRVMKAAVEDAVEKGADLLRRWGGMPVPRTAELAPAEAVTVPHLALDRYEAERPSPRAACRIGDERFMPQDL.

Ni(2+)-binding residues include Glu15, Asp61, and His92.

This sequence belongs to the peptidase A31 family.

Its function is as follows. Absolutely required for hydrogenase activity. Mediates the attachment of hydrogenase to the bacterial membrane; attachment is a requirement for enzymatic activity. The chain is Hydrogenase expression/formation protein HoxM (hoxM) from Cupriavidus necator (strain ATCC 17699 / DSM 428 / KCTC 22496 / NCIMB 10442 / H16 / Stanier 337) (Ralstonia eutropha).